The chain runs to 374 residues: Calcium/calmodulin-dependent protein kinase type 1 (374 aa).

Residues 20–276 (YDFRDVLGTG…CEQALQHPWI (257 aa)) form the Protein kinase domain. Residues 26 to 34 (LGTGAFSEV) and Lys49 contribute to the ATP site. Lys59 is covalently cross-linked (Glycyl lysine isopeptide (Lys-Gly) (interchain with G-Cter in ubiquitin)). Asp141 (proton acceptor) is an active-site residue. Thr177 is modified (phosphothreonine; by CaMKK1 and CaMKK2). The short motif at 263–264 (KR) is the Involved in nuclear import element. Residues 276-316 (IAGDTALDKNIHQSVSEQIKKNFAKSKWKQAFNATAVVRHM) form an autoinhibitory domain region. Residues 296-317 (KNFAKSKWKQAFNATAVVRHMR) are calmodulin-binding. Residues 315-321 (HMRKLQL) carry the Nuclear export signal motif.

This sequence belongs to the protein kinase superfamily. CAMK Ser/Thr protein kinase family. CaMK subfamily. As to quaternary structure, monomer. Interacts with XPO1. Phosphorylated by CaMKK1 and CaMKK2 on Thr-177. In terms of processing, polybiquitinated by the E3 ubiquitin-protein ligase complex SCF(FBXL12), leading to proteasomal degradation. As to expression, widely expressed.

It is found in the cytoplasm. The protein resides in the nucleus. It carries out the reaction L-seryl-[protein] + ATP = O-phospho-L-seryl-[protein] + ADP + H(+). It catalyses the reaction L-threonyl-[protein] + ATP = O-phospho-L-threonyl-[protein] + ADP + H(+). Activated by Ca(2+)/calmodulin. Binding of calmodulin results in conformational change that relieves intrasteric autoinhibition and allows phosphorylation of Thr-177 within the activation loop by CaMKK1 or CaMKK2. Phosphorylation of Thr-177 results in several fold increase in total activity. Unlike CaMK4, is unable to exhibit autonomous activity after Ca(2+)/calmodulin activation. In terms of biological role, calcium/calmodulin-dependent protein kinase that operates in the calcium-triggered CaMKK-CaMK1 signaling cascade and, upon calcium influx, regulates transcription activators activity, cell cycle, hormone production, cell differentiation, actin filament organization and neurite outgrowth. Recognizes the substrate consensus sequence [MVLIF]-x-R-x(2)-[ST]-x(3)-[MVLIF]. Regulates axonal extension and growth cone motility in hippocampal and cerebellar nerve cells. Upon NMDA receptor-mediated Ca(2+) elevation, promotes dendritic growth in hippocampal neurons and is essential in synapses for full long-term potentiation (LTP) and ERK2-dependent translational activation. Downstream of NMDA receptors, promotes the formation of spines and synapses in hippocampal neurons by phosphorylating ARHGEF7/BETAPIX on 'Ser-516', which results in the enhancement of ARHGEF7 activity and activation of RAC1. Promotes neuronal differentiation and neurite outgrowth by activation and phosphorylation of MARK2 on 'Ser-91', 'Ser-92', 'Ser-93' and 'Ser-294'. Promotes nuclear export of HDAC5 and binding to 14-3-3 by phosphorylation of 'Ser-259' and 'Ser-498' in the regulation of muscle cell differentiation. Regulates NUMB-mediated endocytosis by phosphorylation of NUMB on 'Ser-275' and 'Ser-294'. Involved in the regulation of basal and estrogen-stimulated migration of medulloblastoma cells through ARHGEF7/BETAPIX phosphorylation. Is required for proper activation of cyclin-D1/CDK4 complex during G1 progression in diploid fibroblasts. Plays a role in K(+) and ANG2-mediated regulation of the aldosterone synthase (CYP11B2) to produce aldosterone in the adrenal cortex. Phosphorylates EIF4G3/eIF4GII. In vitro phosphorylates CREB1, ATF1, CFTR, MYL9 and SYN1/synapsin I. The protein is Calcium/calmodulin-dependent protein kinase type 1 (Camk1) of Rattus norvegicus (Rat).